The following is a 46-amino-acid chain: Diuretic hormone (46 aa).

Isoleucine amide is present on Ile46.

Belongs to the sauvagine/corticotropin-releasing factor/urotensin I family.

The protein resides in the secreted. Its function is as follows. Regulation of fluid secretion. Stimulates primary urine secretion by Malpighian tubules and causes a dose-dependent stimulation of cAMP levels in the tubules. This chain is Diuretic hormone, found in Periplaneta americana (American cockroach).